The primary structure comprises 418 residues: Glutamate-1-semialdehyde 2,1-aminomutase (418 aa).

Lys-262 is subject to N6-(pyridoxal phosphate)lysine.

It belongs to the class-III pyridoxal-phosphate-dependent aminotransferase family. HemL subfamily. The cofactor is pyridoxal 5'-phosphate.

The protein localises to the cytoplasm. The catalysed reaction is (S)-4-amino-5-oxopentanoate = 5-aminolevulinate. The protein operates within porphyrin-containing compound metabolism; protoporphyrin-IX biosynthesis; 5-aminolevulinate from L-glutamyl-tRNA(Glu): step 2/2. This Archaeoglobus fulgidus (strain ATCC 49558 / DSM 4304 / JCM 9628 / NBRC 100126 / VC-16) protein is Glutamate-1-semialdehyde 2,1-aminomutase (hemL).